Consider the following 353-residue polypeptide: tRNA N6-adenosine threonylcarbamoyltransferase (353 aa).

Fe cation is bound by residues H111 and H115. Substrate contacts are provided by residues 134-138 (LVSGG), D167, G180, D184, and N279. Position 307 (D307) interacts with Fe cation.

The protein belongs to the KAE1 / TsaD family. Requires Fe(2+) as cofactor.

It is found in the cytoplasm. The catalysed reaction is L-threonylcarbamoyladenylate + adenosine(37) in tRNA = N(6)-L-threonylcarbamoyladenosine(37) in tRNA + AMP + H(+). Its function is as follows. Required for the formation of a threonylcarbamoyl group on adenosine at position 37 (t(6)A37) in tRNAs that read codons beginning with adenine. Is involved in the transfer of the threonylcarbamoyl moiety of threonylcarbamoyl-AMP (TC-AMP) to the N6 group of A37, together with TsaE and TsaB. TsaD likely plays a direct catalytic role in this reaction. The polypeptide is tRNA N6-adenosine threonylcarbamoyltransferase (Thermosynechococcus vestitus (strain NIES-2133 / IAM M-273 / BP-1)).